We begin with the raw amino-acid sequence, 961 residues long: MVKAYLDNVRKYIPHYWPMTTFVHHNPLHGFEDMPFKEALKQASKLYKAKVYMDPDYYVELYKEGIIKRDILEKNLFEFLKSIGLQMYFAESKKFITEISQDWKYYKVKSSTTPDINLIDYFNQKIVKDEDTLFQELIEDMMLSEILDAILEDNTTDIIEKEILEFVARFLDEGQTTMSMPEREKGMFGAFKLYEGLNTSLNEEEYADTILHELSPKNVERYILNHLLKDFGWAAFIKYREDNEDYYFQQIHPASLLEYLAVRLHYEKKYLNHYPISNFVELQKAFEQNKTLFVLKLLKAKNILPSKYIDRLEEKDSPKAILSDYLSEEVFLEAYRIQNIANELLLHLDKQKDITDFAFLIEKLKEEEGYIWLKSLEDSYIKEYTIDFLQSNEKIQRDILASAVFCIDVRSEAIRRHIERLGNYNTYGVAGFFGTPIAFIEFDKGHEQYLCPALIKPQKIIFELPEDEHHDYKTKHNINYTFKKTLESLKNNPYTPFFMVEAMGWLFGVNLFGKTLFPDFTLKILSFIKAKKPKTRFTIDKLSQEEIEFYAQKFFIQKIQEAYHQEFKKHINDKKAKDLFEAIINENHKGIDERILEILKTKYNINKESFELEKIRLSNVGYTEEEQIKLVENFLKLIGLTENIPKFVLLIAHGSTSDNNPFESALDCGACGGNNGLPNVRILASIANRNQIRKGLEKVGIKIPEDTIFIPGIHNTTTDEITFYDTEVMPQKDRALFDKIVKDFKIASQKTREERAKTLPYAGSGDRIPVRAIDWSETRPEWGLSKNMGVYVGKRSSTQNIALKNRFFMQSYTWEIDKDNKILKNILSGPFIIGEWINMEHYFSTTDNERLGAGSKVYHNVVAKVGVWTGNYGDLRTGLPYQTVYHDGVPYHEPIRLLTFIEAPAEKVLEAAQEVKEALKLVVNEWVRLIIIDKLKGVAYTFKDGNLEVLVDSRGINQFVI.

Positions 406, 408, 653, and 668 each coordinate Zn(2+).

It belongs to the inorganic carbon transporter (TC 9.A.2) DabA family. As to quaternary structure, forms a complex with DabB. Requires Zn(2+) as cofactor.

The protein localises to the cell inner membrane. In terms of biological role, part of an energy-coupled inorganic carbon pump. In Hydrogenobaculum sp. (strain Y04AAS1), this protein is Probable inorganic carbon transporter subunit DabA.